A 75-amino-acid chain; its full sequence is Translation initiation factor IF-1 (75 aa).

The 75-residue stretch at 1–75 folds into the S1-like domain; that stretch reads MANLPKEQKL…SKGRIVYRFK (75 aa).

Belongs to the IF-1 family. In terms of assembly, component of the 30S ribosomal translation pre-initiation complex which assembles on the 30S ribosome in the order IF-2 and IF-3, IF-1 and N-formylmethionyl-tRNA(fMet); mRNA recruitment can occur at any time during PIC assembly.

Its subcellular location is the cytoplasm. One of the essential components for the initiation of protein synthesis. Stabilizes the binding of IF-2 and IF-3 on the 30S subunit to which N-formylmethionyl-tRNA(fMet) subsequently binds. Helps modulate mRNA selection, yielding the 30S pre-initiation complex (PIC). Upon addition of the 50S ribosomal subunit IF-1, IF-2 and IF-3 are released leaving the mature 70S translation initiation complex. In Mesomycoplasma hyopneumoniae (strain 232) (Mycoplasma hyopneumoniae), this protein is Translation initiation factor IF-1.